Here is a 103-residue protein sequence, read N- to C-terminus: V-type ATP synthase subunit F (103 aa).

It belongs to the V-ATPase F subunit family.

Produces ATP from ADP in the presence of a proton gradient across the membrane. This chain is V-type ATP synthase subunit F, found in Clostridium botulinum (strain Alaska E43 / Type E3).